The chain runs to 405 residues: 8-amino-7-oxononanoate synthase (405 aa).

Arg-23 lines the substrate pocket. 114 to 115 is a binding site for pyridoxal 5'-phosphate; it reads GY. His-139 is a binding site for substrate. Residues Ser-185, His-213, and Thr-245 each contribute to the pyridoxal 5'-phosphate site. Lys-248 carries the N6-(pyridoxal phosphate)lysine modification. Thr-366 is a substrate binding site.

The protein belongs to the class-II pyridoxal-phosphate-dependent aminotransferase family. BioF subfamily. As to quaternary structure, homodimer. Pyridoxal 5'-phosphate serves as cofactor.

The enzyme catalyses 6-carboxyhexanoyl-[ACP] + L-alanine + H(+) = (8S)-8-amino-7-oxononanoate + holo-[ACP] + CO2. The protein operates within cofactor biosynthesis; biotin biosynthesis. In terms of biological role, catalyzes the decarboxylative condensation of pimeloyl-[acyl-carrier protein] and L-alanine to produce 8-amino-7-oxononanoate (AON), [acyl-carrier protein], and carbon dioxide. The polypeptide is 8-amino-7-oxononanoate synthase (Delftia acidovorans (strain DSM 14801 / SPH-1)).